A 186-amino-acid polypeptide reads, in one-letter code: Potassium-transporting ATPase KdpC subunit (186 aa).

A helical transmembrane segment spans residues 10–30; it reads LTIITMVLCGFLFPLAITLIG.

The protein belongs to the KdpC family. The system is composed of three essential subunits: KdpA, KdpB and KdpC.

The protein localises to the cell membrane. Part of the high-affinity ATP-driven potassium transport (or Kdp) system, which catalyzes the hydrolysis of ATP coupled with the electrogenic transport of potassium into the cytoplasm. This subunit acts as a catalytic chaperone that increases the ATP-binding affinity of the ATP-hydrolyzing subunit KdpB by the formation of a transient KdpB/KdpC/ATP ternary complex. The chain is Potassium-transporting ATPase KdpC subunit from Staphylococcus aureus (strain MRSA252).